A 222-amino-acid polypeptide reads, in one-letter code: Pectate lyase A (222 aa).

Positions Met1–Ala26 are cleaved as a signal peptide.

This sequence belongs to the polysaccharide lyase 3 family. The cofactor is Ca(2+).

It localises to the secreted. It catalyses the reaction Eliminative cleavage of (1-&gt;4)-alpha-D-galacturonan to give oligosaccharides with 4-deoxy-alpha-D-galact-4-enuronosyl groups at their non-reducing ends.. It carries out the reaction Eliminative cleavage of (1-&gt;4)-alpha-D-galacturonan methyl ester to give oligosaccharides with 4-deoxy-6-O-methyl-alpha-D-galact-4-enuronosyl groups at their non-reducing ends.. It participates in glycan metabolism; pectin degradation. Catalyzes the depolymerization of both polygalacturonate and pectins with low (20-34%) and high (90%) levels of methyl esterification, with an endo mode of action. In contrast to the majority of pectate lyases, displays high activity on highly methylated pectins. Does not show xylanase and cellulase activity. The sequence is that of Pectate lyase A from Paenibacillus amylolyticus.